We begin with the raw amino-acid sequence, 167 residues long: Small ribosomal subunit protein uS5 (167 aa).

The S5 DRBM domain maps to 12–75 (LQEKLITVNR…EKARRNMVTI (64 aa)).

Belongs to the universal ribosomal protein uS5 family. As to quaternary structure, part of the 30S ribosomal subunit. Contacts proteins S4 and S8.

Its function is as follows. With S4 and S12 plays an important role in translational accuracy. In terms of biological role, located at the back of the 30S subunit body where it stabilizes the conformation of the head with respect to the body. The polypeptide is Small ribosomal subunit protein uS5 (Buchnera aphidicola subsp. Schizaphis graminum (strain Sg)).